A 194-amino-acid chain; its full sequence is GTP cyclohydrolase 1 (194 aa).

The Zn(2+) site is built by Cys85, His88, and Cys156.

Belongs to the GTP cyclohydrolase I family. As to quaternary structure, toroid-shaped homodecamer, composed of two pentamers of five dimers.

It carries out the reaction GTP + H2O = 7,8-dihydroneopterin 3'-triphosphate + formate + H(+). Its pathway is cofactor biosynthesis; 7,8-dihydroneopterin triphosphate biosynthesis; 7,8-dihydroneopterin triphosphate from GTP: step 1/1. The chain is GTP cyclohydrolase 1 from Bacteroides fragilis (strain YCH46).